The primary structure comprises 159 residues: Ribose-5-phosphate isomerase B (159 aa).

Residues 8–9 and 67–71 each bind D-ribulose 5-phosphate; these read DH and GSGNG. Catalysis depends on glutamate 72, which acts as the Proton acceptor. The Proton donor role is filled by histidine 99. Asparagine 100, arginine 110, arginine 134, and arginine 138 together coordinate D-ribulose 5-phosphate.

This sequence belongs to the LacAB/RpiB family. In terms of assembly, homodimer.

The catalysed reaction is aldehydo-D-ribose 5-phosphate = D-ribulose 5-phosphate. The protein operates within carbohydrate degradation; pentose phosphate pathway; D-ribose 5-phosphate from D-ribulose 5-phosphate (non-oxidative stage): step 1/1. Its function is as follows. Catalyzes the interconversion of ribulose-5-P and ribose-5-P. The protein is Ribose-5-phosphate isomerase B of Mycolicibacterium paratuberculosis (strain ATCC BAA-968 / K-10) (Mycobacterium paratuberculosis).